We begin with the raw amino-acid sequence, 265 residues long: NAD-capped RNA hydrolase NudC (265 aa).

R76 serves as a coordination point for substrate. 4 residues coordinate Zn(2+): C106, C109, C124, and C127. Y132 is a binding site for substrate. One can recognise a Nudix hydrolase domain in the interval 133–256 (PRISPAMMVL…SIAHRLIRHA (124 aa)). The a divalent metal cation site is built by A166, E182, and E186. The Nudix box motif lies at 167–188 (GFVEPGETLEECVHRETWEEVG). A substrate-binding site is contributed by 200-207 (QSWPFPHS). E227 contacts a divalent metal cation. A249 is a substrate binding site.

This sequence belongs to the Nudix hydrolase family. NudC subfamily. In terms of assembly, homodimer. Mg(2+) is required as a cofactor. Requires Mn(2+) as cofactor. The cofactor is Zn(2+).

It carries out the reaction a 5'-end NAD(+)-phospho-ribonucleoside in mRNA + H2O = a 5'-end phospho-adenosine-phospho-ribonucleoside in mRNA + beta-nicotinamide D-ribonucleotide + 2 H(+). The enzyme catalyses NAD(+) + H2O = beta-nicotinamide D-ribonucleotide + AMP + 2 H(+). The catalysed reaction is NADH + H2O = reduced beta-nicotinamide D-ribonucleotide + AMP + 2 H(+). In terms of biological role, mRNA decapping enzyme that specifically removes the nicotinamide adenine dinucleotide (NAD) cap from a subset of mRNAs by hydrolyzing the diphosphate linkage to produce nicotinamide mononucleotide (NMN) and 5' monophosphate mRNA. The NAD-cap is present at the 5'-end of some mRNAs and stabilizes RNA against 5'-processing. Has preference for mRNAs with a 5'-end purine. Catalyzes the hydrolysis of a broad range of dinucleotide pyrophosphates. The protein is NAD-capped RNA hydrolase NudC of Chromobacterium violaceum (strain ATCC 12472 / DSM 30191 / JCM 1249 / CCUG 213 / NBRC 12614 / NCIMB 9131 / NCTC 9757 / MK).